Reading from the N-terminus, the 190-residue chain is Corticoliberin (190 aa).

The N-terminal stretch at 1 to 24 (MRLRLLVSVGVLLVALLPSPPCRA) is a signal peptide. Residues 25–147 (LLSRGPIPGA…QEAPAARKRR (123 aa)) constitute a propeptide that is removed on maturation. 2 disordered regions span residues 33-57 (GARQ…QEPQ) and 116-151 (RRPF…SQEP). Ala-188 carries the post-translational modification Alanine amide.

The protein belongs to the sauvagine/corticotropin-releasing factor/urotensin I family. Interacts (via C-terminus) with CRFR1 (via N-terminal extracellular domain). In terms of tissue distribution, produced by the hypothalamus.

Its subcellular location is the secreted. Hormone regulating the release of corticotropin from pituitary gland. Induces NLRP6 in intestinal epithelial cells, hence may influence gut microbiota profile. The sequence is that of Corticoliberin (CRH) from Bos taurus (Bovine).